The following is a 384-amino-acid chain: Alanine racemase (384 aa).

Lysine 39 acts as the Proton acceptor; specific for D-alanine in catalysis. Position 39 is an N6-(pyridoxal phosphate)lysine (lysine 39). Arginine 138 is a substrate binding site. Tyrosine 265 acts as the Proton acceptor; specific for L-alanine in catalysis. Substrate is bound at residue methionine 312.

Belongs to the alanine racemase family. It depends on pyridoxal 5'-phosphate as a cofactor.

It carries out the reaction L-alanine = D-alanine. It functions in the pathway amino-acid biosynthesis; D-alanine biosynthesis; D-alanine from L-alanine: step 1/1. Its function is as follows. Catalyzes the interconversion of L-alanine and D-alanine. May also act on other amino acids. This is Alanine racemase (alr) from Staphylococcus carnosus (strain TM300).